The sequence spans 682 residues: Pesticidal crystal protein Cry19Ba (682 aa).

This sequence belongs to the delta endotoxin family.

Its function is as follows. Promotes colloidosmotic lysis by binding to the midgut epithelial cells of mosquitos. Has larvicidal activity against Culex pipiens molestus, but not to Anopheles stephensi. The polypeptide is Pesticidal crystal protein Cry19Ba (Bacillus thuringiensis subsp. higo).